The following is an 86-amino-acid chain: uncharacterized protein (86 aa).

2 TPR repeats span residues 8–41 (AEYYYKKGVEVGNKGDVEKALEYFNKAIELNPFY) and 42–75 (RDAWFNKALALRILGRYEEARECFFRGLAVEKHL).

This is an uncharacterized protein from Methanocaldococcus jannaschii (strain ATCC 43067 / DSM 2661 / JAL-1 / JCM 10045 / NBRC 100440) (Methanococcus jannaschii).